The following is a 315-amino-acid chain: uncharacterized protein (315 aa).

Basic residues predominate over residues 296–308 (RSKLRKGTHKRTP). The disordered stretch occupies residues 296–315 (RSKLRKGTHKRTPGRAGDAD).

It belongs to the metallo-dependent hydrolases superfamily. Peptidase M19 family.

This is an uncharacterized protein from Acinetobacter calcoaceticus.